Consider the following 340-residue polypeptide: Putative inactive cytochrome P450 family member 4Z2 (340 aa).

Over 1 to 9 (MEPSWLQEL) the chain is Cytoplasmic. The helical; Signal-anchor for type II membrane protein transmembrane segment at 10-30 (MAHPFLLLILLCMSLLLFQVI) threads the bilayer. Residues 31–340 (RLYQRRRWTI…AKYPEHQQRC (310 aa)) are Lumenal-facing.

This sequence belongs to the cytochrome P450 family. It depends on heme as a cofactor. In terms of tissue distribution, detected at low levels in mammary gland and mammary carcinoma.

It is found in the membrane. The polypeptide is Putative inactive cytochrome P450 family member 4Z2 (CYP4Z2P) (Homo sapiens (Human)).